The chain runs to 464 residues: Fumarate hydratase class II (464 aa).

Residues 98-100 (SGT), 129-132 (HPND), 139-141 (SSN), and threonine 187 contribute to the substrate site. The active-site Proton donor/acceptor is histidine 188. The active site involves serine 318. Substrate is bound by residues serine 319 and 324–326 (KVN).

It belongs to the class-II fumarase/aspartase family. Fumarase subfamily. Homotetramer.

The protein localises to the cytoplasm. It carries out the reaction (S)-malate = fumarate + H2O. Its pathway is carbohydrate metabolism; tricarboxylic acid cycle; (S)-malate from fumarate: step 1/1. In terms of biological role, involved in the TCA cycle. Catalyzes the stereospecific interconversion of fumarate to L-malate. The polypeptide is Fumarate hydratase class II (Haemophilus influenzae (strain ATCC 51907 / DSM 11121 / KW20 / Rd)).